The chain runs to 251 residues: 3-dehydroquinate dehydratase (251 aa).

3-dehydroquinate is bound by residues 47–49 (EWR) and Arg-83. The active-site Proton donor/acceptor is the His-144. Catalysis depends on Lys-171, which acts as the Schiff-base intermediate with substrate. Residues Arg-214, Ser-233, and Gln-237 each contribute to the 3-dehydroquinate site.

This sequence belongs to the type-I 3-dehydroquinase family. Homodimer.

The enzyme catalyses 3-dehydroquinate = 3-dehydroshikimate + H2O. It participates in metabolic intermediate biosynthesis; chorismate biosynthesis; chorismate from D-erythrose 4-phosphate and phosphoenolpyruvate: step 3/7. In terms of biological role, involved in the third step of the chorismate pathway, which leads to the biosynthesis of aromatic amino acids. Catalyzes the cis-dehydration of 3-dehydroquinate (DHQ) and introduces the first double bond of the aromatic ring to yield 3-dehydroshikimate. This Klebsiella pneumoniae (strain 342) protein is 3-dehydroquinate dehydratase.